Reading from the N-terminus, the 128-residue chain is L-ectoine synthase (128 aa).

The protein belongs to the ectoine synthase family.

The catalysed reaction is (2S)-4-acetamido-2-aminobutanoate = L-ectoine + H2O. It functions in the pathway amine and polyamine biosynthesis; ectoine biosynthesis; L-ectoine from L-aspartate 4-semialdehyde: step 3/3. Its function is as follows. Catalyzes the circularization of gamma-N-acetyl-alpha,gamma-diaminobutyric acid (ADABA) to ectoine (1,4,5,6-tetrahydro-2-methyl-4-pyrimidine carboxylic acid), which is an excellent osmoprotectant. The polypeptide is L-ectoine synthase (Vibrio parahaemolyticus serotype O3:K6 (strain RIMD 2210633)).